A 495-amino-acid chain; its full sequence is Glucokinase (495 aa).

The Hexokinase domain occupies 3–483 (SALLDEAARI…SGVGAALIAL (481 aa)). Residues 57 to 206 (NGTEKGLYLA…GLPVRVAALV (150 aa)) form a hexokinase small subdomain region. Lys-93 serves as a coordination point for ATP. A glucose-binding region spans residues 149-175 (DLGFTFSFPVRQLGINKGTLIRWTKGF). Positions 207-472 (NDTVGTLMAR…KKIRIGISKD (266 aa)) are hexokinase large subdomain. An ATP-binding site is contributed by 472–477 (DGSGVG).

Belongs to the hexokinase family. In terms of assembly, monomer.

It carries out the reaction D-glucose + ATP = D-glucose 6-phosphate + ADP + H(+). The enzyme catalyses a D-hexose + ATP = a D-hexose 6-phosphate + ADP + H(+). The catalysed reaction is D-mannose + ATP = D-mannose 6-phosphate + ADP + H(+). It catalyses the reaction D-glucosamine + ATP = D-glucosamine 6-phosphate + ADP + H(+). The protein operates within carbohydrate metabolism; hexose metabolism. It functions in the pathway carbohydrate degradation; glycolysis; D-glyceraldehyde 3-phosphate and glycerone phosphate from D-glucose: step 1/4. Functionally, the enzyme has great affinity for glucose. Mannose, 2-deoxyglucose and glucosamine can serve as substrates. The chain is Glucokinase (glkA) from Aspergillus niger.